Here is a 202-residue protein sequence, read N- to C-terminus: MNPEYDYLFKLLLIGDSGVGKSCLLLRFADDSYLESYISTIGVDFKIRTVEQDGKTIKLQIWDTAGQERFRTITSSYYRGAHGIIVVYDVTDQESFNNVKQWLNEIDRYASENVNKLLVGNKCDLAENRVVSYEAGKALADEIGIPFLETSAKDATNVEKAFMTMAGEIKNRMASQPATNASKPATVQMRGQPVAQQSSCCS.

Residues 15-23, 33-40, 63-67, 121-124, and 151-153 each bind GTP; these read GDSGVGKSC, YLESYIST, DTAGQ, NKCD, and SAK. The Effector region motif lies at 37–45; sequence YISTIGVDF. A compositionally biased stretch (polar residues) spans 174–185; it reads ASQPATNASKPA. The tract at residues 174-202 is disordered; it reads ASQPATNASKPATVQMRGQPVAQQSSCCS. S-geranylgeranyl cysteine attachment occurs at residues cysteine 200 and cysteine 201.

This sequence belongs to the small GTPase superfamily. Rab family.

The protein resides in the cell membrane. Possesses GTPase activity. The sequence is that of Ras-related protein RIC1 (RIC1) from Oryza sativa subsp. japonica (Rice).